We begin with the raw amino-acid sequence, 393 residues long: MAEIVLDHVNKSYPDGHTAVRDLNLTIADGEFLILVGPSGCGKTTTLNMIAGLEDISSGELRIAGERVNEKAPKDRDIAMVFQSYALYPHMTVRQNIAFPLTLAKMRKADIAQKVSETAKILDLTNLLDRKPSQLSGGQRQRVAMGRAIVRHPKAFLMDEPLSNLDAKLRVQMRGEIAQLQRRLGTTTVYVTHDQTEAMTLGDRVVVMYGGIAQQIGTPEELYERPANLFVAGFIGSPAMNFFPARLTAIGLTLPFGEVTLAPEVQGVIAAHPKPENVIVGVRPEHIQDAALIDAYQRIRALTFQVKVNLVESLGADKYLYFTTESPAVHSVQLDELAEVEGESALHENQFVARVPAESKVAIGQSVELAFDTARLAVFDADSGANLTIPHRA.

The ABC transporter domain occupies 4 to 235 (IVLDHVNKSY…PANLFVAGFI (232 aa)). 37–44 (GPSGCGKT) lines the ATP pocket. Positions 135 to 139 (LSGGQ) match the Helical C-loop; LSGGQ motif motif.

This sequence belongs to the ABC transporter superfamily. As to quaternary structure, monomer. Homodimerizes in the presence of ATP. The complex is composed of two ATP-binding proteins (SugC), two transmembrane proteins (SugA and SugB) and a solute-binding protein (LpqY).

It localises to the cell inner membrane. The enzyme catalyses alpha,alpha-trehalose(out) + ATP + H2O = alpha,alpha-trehalose(in) + ADP + phosphate + H(+). Functionally, part of the ABC transporter complex LpqY-SugA-SugB-SugC, which is highly specific for uptake of trehalose. Involved in the recycling of extracellular trehalose released from trehalose-containing molecules synthesized by M.tuberculosis. Trehalose uptake is essential for virulence. Responsible for energy coupling to the transport system. This is Trehalose import ATP-binding protein SugC (sugC) from Mycobacterium tuberculosis (strain CDC 1551 / Oshkosh).